We begin with the raw amino-acid sequence, 34 residues long: MEPTQTINLIALSLIVVVHAGVLALRLGISLGRN.

The chain crosses the membrane as a helical span at residues 9–29 (LIALSLIVVVHAGVLALRLGI).

It belongs to the PsaM family.

It localises to the cellular thylakoid membrane. The chain is Photosystem I reaction center subunit XII from Prochlorococcus marinus (strain MIT 9312).